The following is a 59-amino-acid chain: ATP synthase protein 8 (59 aa).

Residues 7 to 23 (LSPPFLYFELIGHFQVE) traverse the membrane as a helical segment.

Belongs to the ATPase protein 8 family. As to quaternary structure, F-type ATPases have 2 components, CF(1) - the catalytic core - and CF(0) - the membrane proton channel.

It is found in the mitochondrion membrane. In terms of biological role, mitochondrial membrane ATP synthase (F(1)F(0) ATP synthase or Complex V) produces ATP from ADP in the presence of a proton gradient across the membrane which is generated by electron transport complexes of the respiratory chain. F-type ATPases consist of two structural domains, F(1) - containing the extramembraneous catalytic core and F(0) - containing the membrane proton channel, linked together by a central stalk and a peripheral stalk. During catalysis, ATP synthesis in the catalytic domain of F(1) is coupled via a rotary mechanism of the central stalk subunits to proton translocation. Part of the complex F(0) domain. Minor subunit located with subunit a in the membrane. This chain is ATP synthase protein 8 (MT-ATP8), found in Oenothera berteroana (Bertero's evening primrose).